The following is a 134-amino-acid chain: Aspartate 1-decarboxylase (134 aa).

Residue S25 is the Schiff-base intermediate with substrate; via pyruvic acid of the active site. S25 carries the post-translational modification Pyruvic acid (Ser). T57 contacts substrate. The Proton donor role is filled by Y58. 73–75 (GAA) provides a ligand contact to substrate.

It belongs to the PanD family. In terms of assembly, heterooctamer of four alpha and four beta subunits. It depends on pyruvate as a cofactor. Post-translationally, is synthesized initially as an inactive proenzyme, which is activated by self-cleavage at a specific serine bond to produce a beta-subunit with a hydroxyl group at its C-terminus and an alpha-subunit with a pyruvoyl group at its N-terminus.

It is found in the cytoplasm. The enzyme catalyses L-aspartate + H(+) = beta-alanine + CO2. The protein operates within cofactor biosynthesis; (R)-pantothenate biosynthesis; beta-alanine from L-aspartate: step 1/1. Its function is as follows. Catalyzes the pyruvoyl-dependent decarboxylation of aspartate to produce beta-alanine. This is Aspartate 1-decarboxylase from Citrifermentans bemidjiense (strain ATCC BAA-1014 / DSM 16622 / JCM 12645 / Bem) (Geobacter bemidjiensis).